We begin with the raw amino-acid sequence, 476 residues long: Protein DETOXIFICATION 1 (476 aa).

Helical transmembrane passes span 35 to 55 (AAPMATVTIAQYLLPVISVMV), 66 to 86 (GVALANSFTNVTGFSIMCGLV), 117 to 137 (IPICFLISILWLYIEKILISL), 146 to 166 (IAGSYAFWLIPALFGQAIVIP), 184 to 204 (AVTTLLFHVLVCWTLVFLFGL), 208 to 228 (GPAMATSVSFWFYAVILSCYV), 260 to 280 (AAMICLEWWLFEILILCSGLL), 289 to 309 (VLSICLTIETLHYVISAGVAA), 331 to 351 (VLAGLCLWIVESAFFSILLFT), 370 to 390 (VADLTPLLCLSFILDGFTAVL), 402 to 422 (IGAWNNTVSYYLVGAPVGIYL), and 433 to 453 (LWCGVVVGSTVQATILAIVTA).

This sequence belongs to the multi antimicrobial extrusion (MATE) (TC 2.A.66.1) family. In terms of tissue distribution, ubiquitous. Highest expression in flowers and stems.

The protein resides in the cell membrane. Functionally, efflux carrier for plant-derived alkaloids, antibiotics, heavy metal and other toxic compounds. Involved in cadmium detoxification. Requires probably a proton-motive force for the efflux. This Arabidopsis thaliana (Mouse-ear cress) protein is Protein DETOXIFICATION 1.